The following is a 439-amino-acid chain: Tol-Pal system protein TolB (439 aa).

The first 22 residues, 1 to 22 (MKKPLRWLAALTVLLLPLSALA), serve as a signal peptide directing secretion.

Belongs to the TolB family. In terms of assembly, the Tol-Pal system is composed of five core proteins: the inner membrane proteins TolA, TolQ and TolR, the periplasmic protein TolB and the outer membrane protein Pal. They form a network linking the inner and outer membranes and the peptidoglycan layer.

Its subcellular location is the periplasm. In terms of biological role, part of the Tol-Pal system, which plays a role in outer membrane invagination during cell division and is important for maintaining outer membrane integrity. The protein is Tol-Pal system protein TolB of Xanthomonas oryzae pv. oryzae (strain MAFF 311018).